Here is a 126-residue protein sequence, read N- to C-terminus: Large ribosomal subunit protein bL12 (126 aa).

Residues 107-116 (EDAEKAKSQL) show a composition bias toward basic and acidic residues. The segment at 107-126 (EDAEKAKSQLEEAGATVELK) is disordered.

The protein belongs to the bacterial ribosomal protein bL12 family. In terms of assembly, homodimer. Part of the ribosomal stalk of the 50S ribosomal subunit. Forms a multimeric L10(L12)X complex, where L10 forms an elongated spine to which 2 to 4 L12 dimers bind in a sequential fashion. Binds GTP-bound translation factors.

Functionally, forms part of the ribosomal stalk which helps the ribosome interact with GTP-bound translation factors. Is thus essential for accurate translation. The sequence is that of Large ribosomal subunit protein bL12 from Bifidobacterium adolescentis (strain ATCC 15703 / DSM 20083 / NCTC 11814 / E194a).